We begin with the raw amino-acid sequence, 176 residues long: Adenylyl-sulfate kinase (176 aa).

12–19 (GLSGAGKT) provides a ligand contact to ATP. Serine 86 (phosphoserine intermediate) is an active-site residue.

It belongs to the APS kinase family.

It catalyses the reaction adenosine 5'-phosphosulfate + ATP = 3'-phosphoadenylyl sulfate + ADP + H(+). It functions in the pathway sulfur metabolism; hydrogen sulfide biosynthesis; sulfite from sulfate: step 2/3. Functionally, catalyzes the synthesis of activated sulfate. This Synechococcus sp. (strain JA-3-3Ab) (Cyanobacteria bacterium Yellowstone A-Prime) protein is Adenylyl-sulfate kinase.